Reading from the N-terminus, the 576-residue chain is 3-hydroxy-3-methylglutaryl coenzyme A reductase 1 (576 aa).

A disordered region spans residues M1–R35. 2 helical membrane-spanning segments follow: residues A42–A62 and A89–V109. Catalysis depends on E255, which acts as the Charge relay system. The N-linked (GlcNAc...) asparagine glycan is linked to N319. Residues K387 and D463 each act as charge relay system in the active site. A helical transmembrane segment spans residues L532–I552. H561 acts as the Proton donor in catalysis. N565 is a glycosylation site (N-linked (GlcNAc...) asparagine).

It belongs to the HMG-CoA reductase family. In terms of tissue distribution, expressed in trichomes, leaves, flowers, roots and stems.

Its subcellular location is the endoplasmic reticulum membrane. The protein resides in the plastid. It localises to the chloroplast membrane. The protein localises to the peroxisome membrane. It catalyses the reaction (R)-mevalonate + 2 NADP(+) + CoA = (3S)-3-hydroxy-3-methylglutaryl-CoA + 2 NADPH + 2 H(+). It functions in the pathway metabolic intermediate biosynthesis; (R)-mevalonate biosynthesis; (R)-mevalonate from acetyl-CoA: step 3/3. Functionally, catalyzes the synthesis of mevalonate, the specific precursor of all isoprenoid compounds present in plants. Component of the triterpene saponins (e.g. ginsenosides or panaxosides) and phytosterols biosynthetic pathways. Promotes triterpenes accumulation in roots. This chain is 3-hydroxy-3-methylglutaryl coenzyme A reductase 1, found in Cannabis sativa (Hemp).